The chain runs to 162 residues: Protein-export protein SecB (162 aa).

It belongs to the SecB family. In terms of assembly, homotetramer, a dimer of dimers. One homotetramer interacts with 1 SecA dimer.

It localises to the cytoplasm. In terms of biological role, one of the proteins required for the normal export of preproteins out of the cell cytoplasm. It is a molecular chaperone that binds to a subset of precursor proteins, maintaining them in a translocation-competent state. It also specifically binds to its receptor SecA. The polypeptide is Protein-export protein SecB (Pseudomonas syringae pv. syringae (strain B728a)).